The following is a 511-amino-acid chain: Pentatricopeptide repeat-containing protein At5g08510 (511 aa).

PPR repeat units follow at residues 46–80 (CTFL…GLRP), 81–115 (SHHT…GFES), 116–146 (DSFC…MSKR), 147–181 (DVPV…NVTS), 182–213 (WTTV…SVKP), 214–248 (NHIT…GFFD), 249–279 (NIYV…LGNQ), 281–315 (NLCS…GEKP), 316–346 (DAVT…MEEV), and 352–382 (KLEH…MPMK). The tract at residues 387 to 462 (VWGTLLGACS…AAGYSYFVEV (76 aa)) is type E motif. The interval 463-494 (GVDVHKFTVEDKSHPRSYEIYQVLEEIFRRMK) is type E(+) motif.

Belongs to the PPR family. PCMP-E subfamily.

The sequence is that of Pentatricopeptide repeat-containing protein At5g08510 (PCMP-E20) from Arabidopsis thaliana (Mouse-ear cress).